The following is a 106-amino-acid chain: SH3 domain-binding glutamic acid-rich-like protein 2-A (106 aa).

The short motif at 61 to 67 (QGNPLPP) is the SH3-binding element.

It belongs to the SH3BGR family.

The protein localises to the nucleus. The polypeptide is SH3 domain-binding glutamic acid-rich-like protein 2-A (sh3bgrl2-a) (Xenopus laevis (African clawed frog)).